The chain runs to 227 residues: 2-C-methyl-D-erythritol 4-phosphate cytidylyltransferase (227 aa).

The protein belongs to the IspD/TarI cytidylyltransferase family. IspD subfamily.

The enzyme catalyses 2-C-methyl-D-erythritol 4-phosphate + CTP + H(+) = 4-CDP-2-C-methyl-D-erythritol + diphosphate. The protein operates within isoprenoid biosynthesis; isopentenyl diphosphate biosynthesis via DXP pathway; isopentenyl diphosphate from 1-deoxy-D-xylulose 5-phosphate: step 2/6. Functionally, catalyzes the formation of 4-diphosphocytidyl-2-C-methyl-D-erythritol from CTP and 2-C-methyl-D-erythritol 4-phosphate (MEP). The chain is 2-C-methyl-D-erythritol 4-phosphate cytidylyltransferase from Deinococcus geothermalis (strain DSM 11300 / CIP 105573 / AG-3a).